The sequence spans 171 residues: uncharacterized protein (171 aa).

This is an uncharacterized protein from Escherichia coli O157:H7.